We begin with the raw amino-acid sequence, 772 residues long: Tubulin monoglycylase TTLL3 (772 aa).

The segment at 50–81 (PTLLPPQKDLDSSAMGDSDTTEDEDEDEDEEF) is disordered. The segment covering 68–81 (DTTEDEDEDEDEEF) has biased composition (acidic residues). Residues 151 to 510 (ARNVLKLVVK…RMLDRNCDTG (360 aa)) enclose the TTL domain. ATP is bound by residues Lys283, 289–290 (RG), 321–324 (QKYI), 334–336 (KFD), and 378–379 (CN). An a protein-binding site is contributed by Arg289. An L-glutamate-binding site is contributed by Ser381. Asp456, Glu469, and Asn471 together coordinate Mg(2+). ATP is bound at residue Glu469.

Mg(2+) serves as cofactor. Expressed in brain, heart, kidney, testis, liver, lung, muscle, spleen, trachea and colon.

The protein localises to the cytoplasm. It is found in the cytoskeleton. It localises to the cell projection. Its subcellular location is the cilium. The protein resides in the cilium axoneme. The protein localises to the flagellum axoneme. It carries out the reaction L-glutamyl-[protein] + glycine + ATP = glycyl-L-glutamyl-[protein] + ADP + phosphate + H(+). In terms of biological role, monoglycylase which modifies alpha- and beta-tubulin, adding a single glycine on the gamma-carboxyl groups of specific glutamate residues to generate monoglycine side chains within the C-terminal tail of tubulin. Not involved in elongation step of the polyglycylation reaction. Preferentially glycylates a beta-tail peptide over the alpha-tail, although shifts its preference toward alpha-tail as beta-tail glutamylation increases. Competes with polyglutamylases for modification site on beta-tubulin substrate, thereby creating an anticorrelation between glycylation and glutamylation reactions. Together with TTLL8, mediates microtubule glycylation of primary and motile cilia, which is essential for their stability and maintenance. Involved in microtubule glycylation of primary cilia in colon which controls cell proliferation of epithelial cells and plays an essential role in colon cancer development. Together with TTLL8, glycylates sperm flagella which regulates axonemal dynein motor activity, thereby controlling flagellar beat, directional sperm swimming and male fertility. The sequence is that of Tubulin monoglycylase TTLL3 from Homo sapiens (Human).